Here is a 74-residue protein sequence, read N- to C-terminus: Arabinogalactan protein 20 (74 aa).

Positions 1-26 are cleaved as a signal peptide; sequence MASRNSVAVIALFAFVFAVISPFAGA. Q27 carries the post-translational modification Pyrrolidone carboxylic acid. A 4-hydroxyproline mark is found at P31, P33, and P35. Residues P31, P33, and P35 are each glycosylated (O-linked (Ara...) hydroxyproline). Residue S37 is the site of GPI-anchor amidated serine attachment. Positions 38–74 are cleaved as a propeptide — removed in mature form; the sequence is DGTSIDQGIAYLLMVVALVLTYLIHPLDASSSSYTFF.

It belongs to the AG-peptide AGP family. Contains 4-hydroxyproline; hydroxylated on Pro-31, Pro-33 and Pro-35. Post-translationally, O-glycosylated on hydroxyprolines; noncontiguous hydroxylproline residues are glycosylated with arabinogalactan.

The protein localises to the cell membrane. Functionally, proteoglycan that seems to be implicated in diverse developmental roles such as differentiation, cell-cell recognition, embryogenesis and programmed cell death. The polypeptide is Arabinogalactan protein 20 (Arabidopsis thaliana (Mouse-ear cress)).